We begin with the raw amino-acid sequence, 256 residues long: POU domain class 2-associating factor 1 (256 aa).

The segment at Met-1–Arg-23 is disordered. The OCA domain occupies Ala-16–His-38.

It belongs to the POU2AF family. In terms of assembly, interacts with POU2F1/OCT1 and POU2F2/OCT2; the interaction increases POU2F1 and POU2F2 transactivation activity. In terms of processing, ubiquitinated; mediated by SIAH1 or SIAH2 and leading to its subsequent proteasomal degradation. In terms of tissue distribution, B-cell specific. Detected in mainly in spleen, but also in thymus, periphral blood leukocyte and small intestine.

Its subcellular location is the nucleus. In terms of biological role, transcriptional coactivator that specifically associates with either POU2F1/OCT1 or POU2F2/OCT2. It boosts the POU2F1/OCT1 mediated promoter activity and to a lesser extent, that of POU2F2/OCT2. It recognizes the POU domains of POU2F1/OCT1 and POU2F2/OCT2. It is essential for the response of B-cells to antigens and required for the formation of germinal centers. Regulates IL6 expression in B cells as POU2F2/OCT2 coactivator. The polypeptide is POU domain class 2-associating factor 1 (Homo sapiens (Human)).